Consider the following 320-residue polypeptide: Cytochrome f (320 aa).

A signal peptide spans 1–35; sequence MQTRNTFSWIREEITRSISVSLIIYIITRASISSA. The heme site is built by tyrosine 36, cysteine 56, cysteine 59, and histidine 60. Residues 286 to 306 traverse the membrane as a helical segment; sequence VQGLLFFLASVVLAQIFLVLK.

Belongs to the cytochrome f family. As to quaternary structure, the 4 large subunits of the cytochrome b6-f complex are cytochrome b6, subunit IV (17 kDa polypeptide, petD), cytochrome f and the Rieske protein, while the 4 small subunits are PetG, PetL, PetM and PetN. The complex functions as a dimer. Heme is required as a cofactor.

It localises to the plastid. Its subcellular location is the chloroplast thylakoid membrane. In terms of biological role, component of the cytochrome b6-f complex, which mediates electron transfer between photosystem II (PSII) and photosystem I (PSI), cyclic electron flow around PSI, and state transitions. The chain is Cytochrome f from Draba nemorosa (Woodland whitlowgrass).